Consider the following 230-residue polypeptide: MGQKINPTGFRLAVTKDWASKWFAKSTDFSTVLKQDIDVRNYLRQKLANASVGRVVIERPAKSARITIHSARPGVVIGKKGEDIEVLKRDLQVLMGVPVHVNIEEIRRPELDAQIIADGIAQQLEKRVQFRRAMKRAMQNAMRSGAKGIKIMTSGRLNGADIARSEWYREGRVPLHTLRANVDYATSEAHTTYGVLGLKVWVYTEGNIKSSKPEHESKQRKAGRRNAAAN.

Positions 39–107 (VRNYLRQKLA…PVHVNIEEIR (69 aa)) constitute a KH type-2 domain. Residues 210–230 (SSKPEHESKQRKAGRRNAAAN) are disordered.

The protein belongs to the universal ribosomal protein uS3 family. Part of the 30S ribosomal subunit. Forms a tight complex with proteins S10 and S14.

Binds the lower part of the 30S subunit head. Binds mRNA in the 70S ribosome, positioning it for translation. This Neisseria meningitidis serogroup C (strain 053442) protein is Small ribosomal subunit protein uS3.